The sequence spans 690 residues: Signal peptide peptidase-like 2C (690 aa).

Residues 1–28 (MACLGSLHPLGSLLLLFLLLLLSPEARG) form the signal peptide. The Lumenal portion of the chain corresponds to 29 to 192 (EYGLVRVVSK…APLEPVTDYN (164 aa)). The 80-residue stretch at 87–166 (DSSPRQRPLH…AVLRYTDMLD (80 aa)) folds into the PA domain. Asn-106 carries an N-linked (GlcNAc...) asparagine glycan. The helical transmembrane segment at 193–213 (MAIIFILAVGTVAAGGYWAGL) threads the bilayer. Over 214–260 (MEANKLQRRQAQRGGGLGGHNQQQTVAAERSQRAWEDDDFEDAPMDF) the chain is Cytoplasmic. The chain crosses the membrane as a helical span at residues 261–283 (TPAMTGAVVTMSCSIMILLYFFY). Position 284 (Asp-284) is a topological domain, lumenal. The chain crosses the membrane as a helical span at residues 285–307 (CFVYVMIGIFSLGASTGLYSCLA). Topologically, residues 308–328 (PILCHLPLWRYQWVLPGQRVS) are cytoplasmic. Residues 329–349 (VTWPLLLLAGLCAMVTVLWVI) form a helical membrane-spanning segment. Residues 350-354 (HRNED) are Lumenal-facing. Residues 355-373 (HWAWLLQDTLGVAYCLFVL) form a helical membrane-spanning segment. Residues 374–384 (RRVRLPTFKNC) lie on the Cytoplasmic side of the membrane. The helical transmembrane segment at 385–405 (TLFLLALLAFDVFFVFITPLF) threads the bilayer. The active site involves Asp-395. Topologically, residues 406–448 (TKTGESIMVEVASGPADSSSHERLPMVLKVPRLSFSALTLCNQ) are lumenal. The helical transmembrane segment at 449 to 469 (PFSILGFGDIVVPGFLVAYCH) threads the bilayer. The active site involves Asp-457. The Cytoplasmic segment spans residues 470-482 (RFDMQVQSRQVYY). A helical membrane pass occupies residues 483 to 503 (MACTVAYAVGLLVTFVAMILM). Residue Gln-504 is a topological domain, lumenal. The chain crosses the membrane as a helical span at residues 505 to 525 (MGQPALLYLVSSTLLTSLAVA). The PAL signature appears at 508–510 (PAL). Topologically, residues 526 to 690 (TCRQEFTLFW…KKSMSAQAPL (165 aa)) are cytoplasmic. The span at 564 to 573 (EDAKDSRTTN) shows a compositional bias: basic and acidic residues. Positions 564–633 (EDAKDSRTTN…DPNELPSGSP (70 aa)) are disordered. The span at 615-624 (SEGWSDTNLD) shows a compositional bias: polar residues.

The protein belongs to the peptidase A22B family. Interacts (via active sites) with FREY; the interaction stabilizes FREY1 protein and inhibits SPPL2C proteolytic activity. Post-translationally, glycosylated. Highly expressed in testis where it is primarily localised in spermatids (at protein level).

It is found in the endoplasmic reticulum membrane. Functionally, sperm-specific intramembrane-cleaving aspartic protease (I-CLiP) that cleaves distinct tail-anchored proteins and SNARE proteins. In elongated spermatids, modulates intracellular Ca(2+) homeostasis by controlling PLN abundance through proteolytic cleavage. During spermatogenesis, processes SNARE proteins and impacts vesicular trafficking which supports compartmental reorganization in maturating spermatids and may play a role in formation of the acrosome. Its function is as follows. In round spermatids, acts as a scaffold protein supporting FREY1 in IZUMO1 recruitment at the endoplasmic reticulum membrane and coordination of IZUMO1 complex assembly. Stabilizes FREY1 at the endoplasmic reticulum membrane through interaction. May recruit IZUMO1 interaction partners. In terms of biological role, no difference in cleavage specificity compared to isoform 1. This Mus musculus (Mouse) protein is Signal peptide peptidase-like 2C.